The primary structure comprises 92 residues: Defensin-like protein 226 (92 aa).

A signal peptide spans 1–27; it reads MKCGVLFMISCLLITFLVLSHVREVES. Disulfide bonds link C33–C92, C43–C71, C51–C86, and C69–C88.

Belongs to the DEFL family.

The protein resides in the secreted. In Arabidopsis thaliana (Mouse-ear cress), this protein is Defensin-like protein 226 (SCRL2).